Reading from the N-terminus, the 862-residue chain is Probable glutaminase ARB_05535/05536 (862 aa).

The signal sequence occupies residues 1–19 (MLSWVLLAWAVACSALAGA). N-linked (GlcNAc...) asparagine glycans are attached at residues Asn-106, Asn-273, Asn-436, Asn-448, Asn-486, Asn-610, and Asn-744. The disordered stretch occupies residues 798-862 (FLDDKDNNSP…SQMTIVNEND (65 aa)). Residues 853 to 862 (SQMTIVNEND) show a composition bias toward polar residues.

It belongs to the fungal glutaminase gtaA family.

The protein localises to the secreted. It carries out the reaction L-glutamine + H2O = L-glutamate + NH4(+). Its function is as follows. Glutaminase catalyzes the hydrolysis of glutamine to glutamic acid and plays a key role in nitrogen metabolism. The protein is Probable glutaminase ARB_05535/05536 of Arthroderma benhamiae (strain ATCC MYA-4681 / CBS 112371) (Trichophyton mentagrophytes).